The primary structure comprises 322 residues: Solute carrier family 25 member 16 (322 aa).

Solcar repeat units follow at residues Phe-34–Phe-120, Ser-128–Val-219, and Leu-241–Phe-322.

Belongs to the mitochondrial carrier (TC 2.A.29) family.

Its subcellular location is the mitochondrion inner membrane. Its function is as follows. May be involved in the transport of coenzyme A in the mitochondrial matrix. Very little is known about the physiological function of this carrier. In Rattus norvegicus (Rat), this protein is Solute carrier family 25 member 16.